Here is a 97-residue protein sequence, read N- to C-terminus: Large ribosomal subunit protein uL23 (97 aa).

It belongs to the universal ribosomal protein uL23 family. In terms of assembly, part of the 50S ribosomal subunit. Contacts protein L29, and trigger factor when it is bound to the ribosome.

In terms of biological role, one of the early assembly proteins it binds 23S rRNA. One of the proteins that surrounds the polypeptide exit tunnel on the outside of the ribosome. Forms the main docking site for trigger factor binding to the ribosome. The sequence is that of Large ribosomal subunit protein uL23 from Brucella abortus (strain S19).